The sequence spans 162 residues: CASP-like protein 1C1 (162 aa).

At 1–7 (MAKLHRL) the chain is on the cytoplasmic side. Residues 8–28 (ISAVLRLAAAGAAAAAAIIMV) traverse the membrane as a helical segment. The Extracellular portion of the chain corresponds to 29 to 50 (TSHETTSFFGIEMEAKYSYTPS). Residues 51 to 71 (FVFFVVAFAVAFAYSLLALLA) traverse the membrane as a helical segment. Residues 72 to 79 (RPGSTASR) lie on the Cytoplasmic side of the membrane. Residues 80-100 (LLLLSDVMVGMLLTGAVAATG) traverse the membrane as a helical segment. Topologically, residues 101–128 (AISQVGKSGNEHAGWLPICAQVQAYCSH) are extracellular. Residues 129 to 149 (VMGALIAGFVSLLLYFLIIMY) traverse the membrane as a helical segment. Over 150 to 162 (SLHAVAEPLCSCH) the chain is Cytoplasmic.

The protein belongs to the Casparian strip membrane proteins (CASP) family. As to quaternary structure, homodimer and heterodimers.

The protein resides in the cell membrane. The sequence is that of CASP-like protein 1C1 from Sorghum bicolor (Sorghum).